The following is a 255-amino-acid chain: 4-hydroxy-tetrahydrodipicolinate reductase (255 aa).

NAD(+)-binding positions include 9 to 14 (GFKGKM), Asp35, 89 to 91 (GTT), and 115 to 118 (APNF). Catalysis depends on His145, which acts as the Proton donor/acceptor. His146 contributes to the (S)-2,3,4,5-tetrahydrodipicolinate binding site. The active-site Proton donor is the Lys149. 155-156 (GT) is a (S)-2,3,4,5-tetrahydrodipicolinate binding site.

Belongs to the DapB family.

It is found in the cytoplasm. The enzyme catalyses (S)-2,3,4,5-tetrahydrodipicolinate + NAD(+) + H2O = (2S,4S)-4-hydroxy-2,3,4,5-tetrahydrodipicolinate + NADH + H(+). It carries out the reaction (S)-2,3,4,5-tetrahydrodipicolinate + NADP(+) + H2O = (2S,4S)-4-hydroxy-2,3,4,5-tetrahydrodipicolinate + NADPH + H(+). Its pathway is amino-acid biosynthesis; L-lysine biosynthesis via DAP pathway; (S)-tetrahydrodipicolinate from L-aspartate: step 4/4. Catalyzes the conversion of 4-hydroxy-tetrahydrodipicolinate (HTPA) to tetrahydrodipicolinate. This is 4-hydroxy-tetrahydrodipicolinate reductase from Streptococcus pneumoniae (strain 70585).